Reading from the N-terminus, the 331-residue chain is 6-phosphogluconolactonase (331 aa).

Residue Lys287 is modified to N6-acetyllysine.

It belongs to the cycloisomerase 2 family.

It catalyses the reaction 6-phospho-D-glucono-1,5-lactone + H2O = 6-phospho-D-gluconate + H(+). It functions in the pathway carbohydrate degradation; pentose phosphate pathway; D-ribulose 5-phosphate from D-glucose 6-phosphate (oxidative stage): step 2/3. Functionally, catalyzes the hydrolysis of 6-phosphogluconolactone to 6-phosphogluconate. In Shigella sonnei (strain Ss046), this protein is 6-phosphogluconolactonase.